Here is a 226-residue protein sequence, read N- to C-terminus: ATP synthase subunit a (226 aa).

A run of 5 helical transmembrane segments spans residues 17-37, 79-99, 105-125, 168-188, and 200-222; these read FNYLFHLILVAIIVLIVAKLA, LVATIGLIVLTSNVIGIIPGF, SLNLTLCLALSVFLYYNFEGI, FGNIKGDDLFLMVVLSLAPWV, and MALLQTFIFMILTYVYLAGAVVV.

It belongs to the ATPase A chain family. As to quaternary structure, F-type ATPases have 2 components, CF(1) - the catalytic core - and CF(0) - the membrane proton channel. CF(1) has five subunits: alpha(3), beta(3), gamma(1), delta(1), epsilon(1). CF(0) has three main subunits: a(1), b(2) and c(9-12). The alpha and beta chains form an alternating ring which encloses part of the gamma chain. CF(1) is attached to CF(0) by a central stalk formed by the gamma and epsilon chains, while a peripheral stalk is formed by the delta and b chains.

The protein localises to the cell inner membrane. Its function is as follows. Key component of the proton channel; it plays a direct role in the translocation of protons across the membrane. The protein is ATP synthase subunit a of Campylobacter fetus subsp. fetus (strain 82-40).